We begin with the raw amino-acid sequence, 424 residues long: MQLRLPHLQRSKSMAKPLPVSPLARPLPDLATIAGVRLSAVAAGIRYQGRTDLMLAEFVPGTVAAGVYTKNACPGAPVLWCREALTTPYARALLVNAGNANVFTGRAGIQACEDCADATAQLLDCPPQDVFLASTGVIGEKLPQDRIIAALPAARAGLEENGWADAARAIMTTDTFPKAARRDVKINGTPVRIQGIAKGSGMVAPDMATMLAYVATDAKLPQNVLQSLLASGCAQSFNSITVDSDTSTSDMLMIFATGLADNPEVDDVNDPALAEFTLALNDLLLELALMVVRDGEGATKLVRIAVTGADSNLSAHRIALCIANSPLVKTAIAGEDANWGRVVMAVGKSGEPADRDRLSVAIGGTWIAKDGGVVENYDEAPVVAHMKGQEIEIAVDLDLGDGQARVWTCDLTHGYIDINGSYRS.

Substrate-binding residues include threonine 172, lysine 198, threonine 209, glutamate 296, asparagine 419, and serine 424. Threonine 209 functions as the Nucleophile in the catalytic mechanism.

The protein belongs to the ArgJ family. As to quaternary structure, heterotetramer of two alpha and two beta chains.

The protein resides in the cytoplasm. It carries out the reaction N(2)-acetyl-L-ornithine + L-glutamate = N-acetyl-L-glutamate + L-ornithine. It catalyses the reaction L-glutamate + acetyl-CoA = N-acetyl-L-glutamate + CoA + H(+). It functions in the pathway amino-acid biosynthesis; L-arginine biosynthesis; L-ornithine and N-acetyl-L-glutamate from L-glutamate and N(2)-acetyl-L-ornithine (cyclic): step 1/1. Its pathway is amino-acid biosynthesis; L-arginine biosynthesis; N(2)-acetyl-L-ornithine from L-glutamate: step 1/4. Catalyzes two activities which are involved in the cyclic version of arginine biosynthesis: the synthesis of N-acetylglutamate from glutamate and acetyl-CoA as the acetyl donor, and of ornithine by transacetylation between N(2)-acetylornithine and glutamate. The protein is Arginine biosynthesis bifunctional protein ArgJ of Gluconobacter oxydans (strain 621H) (Gluconobacter suboxydans).